Consider the following 246-residue polypeptide: tRNA (guanine-N(1)-)-methyltransferase (246 aa).

Residues Gly117 and 137–142 (IGDYVL) each bind S-adenosyl-L-methionine.

It belongs to the RNA methyltransferase TrmD family. In terms of assembly, homodimer.

The protein localises to the cytoplasm. The enzyme catalyses guanosine(37) in tRNA + S-adenosyl-L-methionine = N(1)-methylguanosine(37) in tRNA + S-adenosyl-L-homocysteine + H(+). Specifically methylates guanosine-37 in various tRNAs. This Acinetobacter baumannii (strain AB307-0294) protein is tRNA (guanine-N(1)-)-methyltransferase.